The primary structure comprises 230 residues: Broad-specificity phosphatase YOR283W (230 aa).

The active-site Tele-phosphohistidine intermediate is His24. Residues 36–37 (QG) and 102–105 (ERYM) each bind substrate. The Proton donor/acceptor role is filled by Glu102.

It belongs to the phosphoglycerate mutase family. BPG-dependent PGAM subfamily.

It is found in the cytoplasm. The protein localises to the nucleus. Its function is as follows. Metal-independent phosphatase active against a broad range of phosphorylated substrates including nucleoside tri- and diphosphates, phosphorylated organic acids, and amino acids. Shows no activity against phytic acid, phosphorylated carbohydrates, and nucleoside monophosphates. In Saccharomyces cerevisiae (strain ATCC 204508 / S288c) (Baker's yeast), this protein is Broad-specificity phosphatase YOR283W.